Reading from the N-terminus, the 177-residue chain is ATP synthase subunit delta (177 aa).

Belongs to the ATPase delta chain family. As to quaternary structure, F-type ATPases have 2 components, F(1) - the catalytic core - and F(0) - the membrane proton channel. F(1) has five subunits: alpha(3), beta(3), gamma(1), delta(1), epsilon(1). F(0) has three main subunits: a(1), b(2) and c(10-14). The alpha and beta chains form an alternating ring which encloses part of the gamma chain. F(1) is attached to F(0) by a central stalk formed by the gamma and epsilon chains, while a peripheral stalk is formed by the delta and b chains.

The protein resides in the cell inner membrane. F(1)F(0) ATP synthase produces ATP from ADP in the presence of a proton or sodium gradient. F-type ATPases consist of two structural domains, F(1) containing the extramembraneous catalytic core and F(0) containing the membrane proton channel, linked together by a central stalk and a peripheral stalk. During catalysis, ATP synthesis in the catalytic domain of F(1) is coupled via a rotary mechanism of the central stalk subunits to proton translocation. In terms of biological role, this protein is part of the stalk that links CF(0) to CF(1). It either transmits conformational changes from CF(0) to CF(1) or is implicated in proton conduction. In Enterobacter sp. (strain 638), this protein is ATP synthase subunit delta.